We begin with the raw amino-acid sequence, 163 residues long: 2-C-methyl-D-erythritol 2,4-cyclodiphosphate synthase (163 aa).

Aspartate 12 and histidine 14 together coordinate a divalent metal cation. 4-CDP-2-C-methyl-D-erythritol 2-phosphate contacts are provided by residues 12-14 (DVH) and 38-39 (HS). A divalent metal cation is bound at residue histidine 46. Residues 60–62 (DIG), 136–139 (TTSE), phenylalanine 143, and arginine 146 each bind 4-CDP-2-C-methyl-D-erythritol 2-phosphate.

The protein belongs to the IspF family. As to quaternary structure, homotrimer. A divalent metal cation serves as cofactor.

It carries out the reaction 4-CDP-2-C-methyl-D-erythritol 2-phosphate = 2-C-methyl-D-erythritol 2,4-cyclic diphosphate + CMP. It functions in the pathway isoprenoid biosynthesis; isopentenyl diphosphate biosynthesis via DXP pathway; isopentenyl diphosphate from 1-deoxy-D-xylulose 5-phosphate: step 4/6. Involved in the biosynthesis of isopentenyl diphosphate (IPP) and dimethylallyl diphosphate (DMAPP), two major building blocks of isoprenoid compounds. Catalyzes the conversion of 4-diphosphocytidyl-2-C-methyl-D-erythritol 2-phosphate (CDP-ME2P) to 2-C-methyl-D-erythritol 2,4-cyclodiphosphate (ME-CPP) with a corresponding release of cytidine 5-monophosphate (CMP). The polypeptide is 2-C-methyl-D-erythritol 2,4-cyclodiphosphate synthase (Xanthomonas oryzae pv. oryzae (strain MAFF 311018)).